We begin with the raw amino-acid sequence, 339 residues long: MKTGEIPLSSSTYINFKQYLASVKPAGAALPTGLQDLLIAVVNTCSKLSHEVAQGALIGLLGPAGTGNVQGEVQQKLDIIANDLLIDGVQGCKSLAGLASEEMELPVPVQGTGDYLLLFDPLDGSSNIDVNVSIGTIFSVLKKQDPAAPLQTSDFLLSGRHQVAAGYVVYGPQTTMALTLGDGVVMFTLNKVTGEFLLIKDSVTISHSTKEFAINMSNMRHWADPVRRYVEECLAGVSGARDKDFNMRWIASMVADVHRVLSRGGVFMYPWDQREPHKPGKLRLMYEVNPMSFLVEQAGGVSTNGTDLIMDLQPTDLHERVSVMLGSKEEIDRIQHYHS.

E101, D120, L122, and D123 together coordinate Mg(2+). Substrate contacts are provided by residues 123-126, N215, and K281; that span reads DGSS. E287 is a Mg(2+) binding site.

The protein belongs to the FBPase class 1 family. Homotetramer. Mg(2+) is required as a cofactor.

The protein localises to the cytoplasm. It catalyses the reaction beta-D-fructose 1,6-bisphosphate + H2O = beta-D-fructose 6-phosphate + phosphate. The protein operates within carbohydrate biosynthesis; gluconeogenesis. The polypeptide is Fructose-1,6-bisphosphatase class 1 (Polynucleobacter necessarius subsp. necessarius (strain STIR1)).